The primary structure comprises 464 residues: MEPEPHSSEAVPTAAALFAWGANSYGQLGLGHKEDVLSAQQLSDFCKSGCIKRITGGGGHSAVVTDEGSLFVCGLNKDGQLGLGHTEEVLYFTPCKSLLGCAIQQVACGWDFTIILTENGQVLSCGSNSFGQLGVPHGPRRCVIPQAIELLREKVVSIAAGLRHALAATASGTVFQWGTGLASSGRRLCPGQTLPLFLTAKEPSTVTGLENSQAVCVLAGSDHSASLTDAGELYVWGSNKHGQLASQAAFLLLPQRIEARCFQNEKIAAVWSGWTHLVAQTVTGKVFTWGRADYGQLGRTVETREGWESEKQDPSLPGSGPQKGTPSCLPCLTGATEISCGSEHNLAVIGGVCHSWGWNEHGMCGDGTEADVWAPKPVPGLRFFLGLHVGCGAGHSLALCQLPALPALGQHPSVTSPSPDATKEARSQEAMEQERNQKERHAETSPQAQSDRFRNGGLVAETLE.

RCC1 repeat units lie at residues 14–66 (AAAL…VVTD), 68–118 (GSLF…ILTE), 119–170 (NGQV…AATA), 172–229 (GTVF…SLTD), 230–282 (AGEL…AQTV), 283–349 (TGKV…LAVI), and 350–401 (GGVC…ALCQ). Over residues 301–313 (VETREGWESEKQD) the composition is skewed to basic and acidic residues. The segment at 301–323 (VETREGWESEKQDPSLPGSGPQK) is disordered. Residues 411-464 (HPSVTSPSPDATKEARSQEAMEQERNQKERHAETSPQAQSDRFRNGGLVAETLE) form a disordered region. The segment covering 421 to 443 (ATKEARSQEAMEQERNQKERHAE) has biased composition (basic and acidic residues). Residue Ser-427 is modified to Phosphoserine.

As to quaternary structure, interacts with SEC5. The interaction occurs only in the presence of magnesium or manganese and is stimulated by dCTP or GTP.

The protein localises to the cytoplasm. It is found in the nucleus. Its function is as follows. Probable guanine nucleotide exchange factor (GEF), which may be involved in the secretion process. The chain is Secretion-regulating guanine nucleotide exchange factor (SERGEF) from Bos taurus (Bovine).